The primary structure comprises 290 residues: Fructokinase (290 aa).

T130 contributes to the ATP binding site. H153, C169, H172, and C175 together coordinate Zn(2+). Residues P183 and 231 to 235 (GVMEK) contribute to the ATP site.

Belongs to the ROK (NagC/XylR) family. As to quaternary structure, homodimer. It depends on Mg(2+) as a cofactor.

It catalyses the reaction D-fructose + ATP = D-fructose 6-phosphate + ADP + H(+). With respect to regulation, inactivated by EDTA. Inhibition by zinc ions (Potential). The sequence is that of Fructokinase (scrK) from Lactococcus lactis subsp. cremoris (Streptococcus cremoris).